The sequence spans 470 residues: E3 ubiquitin-protein ligase TRIM21 (470 aa).

The RING-type zinc-finger motif lies at 20-59 (CSICLDPMVEPMSIECGHCFCKECIFEVGKNGGSSCPECR). Residues C96, H99, C118, and H124 each contribute to the Zn(2+) site. The segment at 96–127 (CMKHGEKLHLFCEEDGQALCWVCAQSGKHRDH) adopts a B box-type zinc-finger fold. The stretch at 188–250 (LQNSLLAQEE…RGSELELLQE (63 aa)) forms a coiled coil. One can recognise a B30.2/SPRY domain in the interval 272–470 (DLTSTCPVPG…APLKLCPLKM (199 aa)).

The protein belongs to the TRIM/RBCC family. As to quaternary structure, homotrimer. Component of a SCF(SKP2)-like complex containing CUL1, SKP1, TRIM21 and SKP2. Interacts with CALR, CUL1, FBXW11, HSPA5, IKBKB, IRF3, SKP1 and VCP. Interacts with SKP2; the interaction with SKP2 does not depend on an intact F-box domain. Interacts (via N-terminus and C-terminus) with DCP2 (via N-terminus and C-terminus). Interacts (via C-terminus) with IRF8 (via C-terminus). Interacts with ULK1, BECN1 and with ATG8 family members, including GABARAP, GABARAPL1, GABARAPL2 and MAP1LC3C/LC3C. Interacts with TRIM21 and SQSTM1/sequestosome 1. Interacts with IRF3. Interacts (via the SPRY domain) with NMI (via coiled-coil domain); the interaction promotes 'Lys-63'-linked ubiquitination of NMI. Interacts with IFI35 and NMI; the interaction facilitates NMI-IFI35 complex formation. Autoubiquitinated; does not lead to its proteasomal degradation. Deubiquitinated by USP4; leading to its stabilization. Autoubiquitinated.

The protein resides in the cytoplasm. Its subcellular location is the cytoplasmic vesicle. The protein localises to the autophagosome. It is found in the nucleus. It localises to the P-body. The protein resides in the stress granule. It catalyses the reaction S-ubiquitinyl-[E2 ubiquitin-conjugating enzyme]-L-cysteine + [acceptor protein]-L-lysine = [E2 ubiquitin-conjugating enzyme]-L-cysteine + N(6)-ubiquitinyl-[acceptor protein]-L-lysine.. Its pathway is protein modification; protein ubiquitination. Its function is as follows. E3 ubiquitin-protein ligase whose activity is dependent on E2 enzymes, UBE2D1, UBE2D2, UBE2E1 and UBE2E2. Forms a ubiquitin ligase complex in cooperation with the E2 UBE2D2 that is used not only for the ubiquitination of USP4 and IKBKB but also for its self-ubiquitination. Component of cullin-RING-based SCF (SKP1-CUL1-F-box protein) E3 ubiquitin-protein ligase complexes such as SCF(SKP2)-like complexes. A TRIM21-containing SCF(SKP2)-like complex is shown to mediate ubiquitination of CDKN1B ('Thr-187' phosphorylated-form), thereby promoting its degradation by the proteasome. Monoubiquitinates IKBKB that will negatively regulates Tax-induced NF-kappa-B signaling. Negatively regulates IFN-beta production post-pathogen recognition by catalyzing polyubiquitin-mediated degradation of IRF3. Mediates the ubiquitin-mediated proteasomal degradation of IgG1 heavy chain, which is linked to the VCP-mediated ER-associated degradation (ERAD) pathway. Promotes IRF8 ubiquitination, which enhanced the ability of IRF8 to stimulate cytokine genes transcription in macrophages. Plays a role in the regulation of the cell cycle progression. Enhances the decapping activity of DCP2. Exists as a ribonucleoprotein particle present in all mammalian cells studied and composed of a single polypeptide and one of four small RNA molecules. At least two isoforms are present in nucleated and red blood cells, and tissue specific differences in RO/SSA proteins have been identified. The common feature of these proteins is their ability to bind HY RNAs.2. Involved in the regulation of innate immunity and the inflammatory response in response to IFNG/IFN-gamma. Organizes autophagic machinery by serving as a platform for the assembly of ULK1, Beclin 1/BECN1 and ATG8 family members and recognizes specific autophagy targets, thus coordinating target recognition with assembly of the autophagic apparatus and initiation of autophagy. Also regulates autophagy through FIP200/RB1CC1 ubiquitination and subsequent decreased protein stability. Represses the innate antiviral response by facilitating the formation of the NMI-IFI35 complex through 'Lys-63'-linked ubiquitination of NMI. During viral infection, promotes cell pyroptosis by mediating 'Lys-6'-linked ubiquitination of ISG12a/IFI27, facilitating its translocation into the mitochondria and subsequent CASP3 activation. When up-regulated through the IFN/JAK/STAT signaling pathway, promotes 'Lys-27'-linked ubiquitination of MAVS, leading to the recruitment of TBK1 and up-regulation of innate immunity. Mediates 'Lys-63'-linked polyubiquitination of G3BP1 in response to heat shock, leading to stress granule disassembly. The protein is E3 ubiquitin-protein ligase TRIM21 (Trim21) of Mus musculus (Mouse).